The primary structure comprises 358 residues: 3-isopropylmalate dehydrogenase (358 aa).

4 residues coordinate substrate: Arg92, Arg102, Arg130, and Asp224. Residues Asp224, Asp248, and Asp252 each coordinate Mg(2+). NAD(+) is bound at residue 282-294 (GSAPDIAGQGIAN).

The protein belongs to the isocitrate and isopropylmalate dehydrogenases family. LeuB type 1 subfamily. In terms of assembly, homodimer. Requires Mg(2+) as cofactor. It depends on Mn(2+) as a cofactor.

Its subcellular location is the cytoplasm. The enzyme catalyses (2R,3S)-3-isopropylmalate + NAD(+) = 4-methyl-2-oxopentanoate + CO2 + NADH. It functions in the pathway amino-acid biosynthesis; L-leucine biosynthesis; L-leucine from 3-methyl-2-oxobutanoate: step 3/4. Functionally, catalyzes the oxidation of 3-carboxy-2-hydroxy-4-methylpentanoate (3-isopropylmalate) to 3-carboxy-4-methyl-2-oxopentanoate. The product decarboxylates to 4-methyl-2 oxopentanoate. The polypeptide is 3-isopropylmalate dehydrogenase (Bordetella avium (strain 197N)).